Here is a 423-residue protein sequence, read N- to C-terminus: LysM domain-containing GPI-anchored protein 3 (423 aa).

Residues 1–24 (MKNPEKPLLLFLILASSLASMATA) form the signal peptide. 4 disulfides stabilise this stretch: Cys-31–Cys-97, Cys-37–Cys-160, Cys-95–Cys-158, and Cys-97–Cys-160. The region spanning 107–154 (THYKTRTSDTLGSIADSVYGGLVSPEQIQVANSETDLSVLDVGTKLVI) is the LysM 1 domain. N-linked (GlcNAc...) asparagine glycosylation is present at Asn-162. The LysM 2 domain maps to 173-216 (LSYVVRGIDTMAGIAKRFSTSVTDLTNVNAMGAPDINPGDILAV). 2 cysteine pairs are disulfide-bonded: Cys-221–Cys-253 and Cys-248–Cys-276. Residue Asn-238 is glycosylated (N-linked (GlcNAc...) asparagine). N-linked (GlcNAc...) asparagine glycosylation is present at Asn-285. A lipid anchor (GPI-anchor amidated glycine) is attached at Gly-394. A propeptide spans 395 to 423 (GSISIASCPLSYYSFIALLIPIGSCFFVF) (removed in mature form).

As to quaternary structure, interacts with peptidoglycans.

Its subcellular location is the cell membrane. Functionally, required as a cell surface receptor for peptidoglycan (PGN) elicitor signaling leading to innate immunity. Plays an essential role in detecting PGNs and restricting bacterial growth (of Pseudomonas syringae pv. tomato DC3000 for example). The polypeptide is LysM domain-containing GPI-anchored protein 3 (LYM3) (Arabidopsis thaliana (Mouse-ear cress)).